The primary structure comprises 81 residues: Arminin 2a (81 aa).

Residues 1–18 (MKTVFAILFLAFIALTYA) form the signal peptide. A propeptide spanning residues 19–57 (RSYEDVKEEIKNEVVKEILEDLEEESDELDDKSKEINDA) is cleaved from the precursor. Alanine 78 is subject to Alanine amide.

The protein belongs to the arminin family. In terms of tissue distribution, expressed in entodermal epithelium along the body column.

The protein resides in the secreted. It localises to the target cell membrane. Antimicrobial peptide with a broad-spectrum antimicrobial activity. Keeps its antibacterial activity under a wide range of salt concentrations that mimic physiological conditions of human blood, which is surprising, since Hydra is an obligate freshwater animal with nearly no salt tolerance. Does not affect red blood cells. The protein is Arminin 2a of Hydra vulgaris (Hydra).